The sequence spans 197 residues: Holliday junction branch migration complex subunit RuvA (197 aa).

Positions 1-63 (MYAYLKGIIT…EDAHLLYGFR (63 aa)) are domain I. Residues 64–142 (SEDEKKLFLS…VAGDDLPAKV (79 aa)) form a domain II region. A flexible linker region spans residues 143-147 (AVQAS). The interval 148–197 (AENQELEEAMEAMLALGYKATELKKIKKFFEGTTDTAENYIKSALKMLVK) is domain III.

This sequence belongs to the RuvA family. Homotetramer. Forms an RuvA(8)-RuvB(12)-Holliday junction (HJ) complex. HJ DNA is sandwiched between 2 RuvA tetramers; dsDNA enters through RuvA and exits via RuvB. An RuvB hexamer assembles on each DNA strand where it exits the tetramer. Each RuvB hexamer is contacted by two RuvA subunits (via domain III) on 2 adjacent RuvB subunits; this complex drives branch migration. In the full resolvosome a probable DNA-RuvA(4)-RuvB(12)-RuvC(2) complex forms which resolves the HJ.

It localises to the cytoplasm. Its function is as follows. The RuvA-RuvB-RuvC complex processes Holliday junction (HJ) DNA during genetic recombination and DNA repair, while the RuvA-RuvB complex plays an important role in the rescue of blocked DNA replication forks via replication fork reversal (RFR). RuvA specifically binds to HJ cruciform DNA, conferring on it an open structure. The RuvB hexamer acts as an ATP-dependent pump, pulling dsDNA into and through the RuvAB complex. HJ branch migration allows RuvC to scan DNA until it finds its consensus sequence, where it cleaves and resolves the cruciform DNA. The sequence is that of Holliday junction branch migration complex subunit RuvA from Streptococcus pneumoniae (strain Hungary19A-6).